A 244-amino-acid polypeptide reads, in one-letter code: Dirigent protein 18 (244 aa).

The signal sequence occupies residues Met1–Ala25.

This sequence belongs to the plant dirigent protein family. In terms of assembly, homodimer.

It is found in the secreted. The protein localises to the extracellular space. The protein resides in the apoplast. Dirigent proteins impart stereoselectivity on the phenoxy radical-coupling reaction, yielding optically active lignans from two molecules of coniferyl alcohol in the biosynthesis of lignans, flavonolignans, and alkaloids and thus plays a central role in plant secondary metabolism. The chain is Dirigent protein 18 (DIR18) from Arabidopsis thaliana (Mouse-ear cress).